A 330-amino-acid chain; its full sequence is Aspartate--ammonia ligase (330 aa).

Belongs to the class-II aminoacyl-tRNA synthetase family. AsnA subfamily.

It is found in the cytoplasm. The catalysed reaction is L-aspartate + NH4(+) + ATP = L-asparagine + AMP + diphosphate + H(+). It functions in the pathway amino-acid biosynthesis; L-asparagine biosynthesis; L-asparagine from L-aspartate (ammonia route): step 1/1. The sequence is that of Aspartate--ammonia ligase from Streptococcus equi subsp. equi (strain 4047).